Consider the following 294-residue polypeptide: Ribosomal RNA small subunit methyltransferase H (294 aa).

Residues 37-39 (GGH), aspartate 58, leucine 93, aspartate 105, and glutamine 112 contribute to the S-adenosyl-L-methionine site.

It belongs to the methyltransferase superfamily. RsmH family.

It localises to the cytoplasm. The catalysed reaction is cytidine(1402) in 16S rRNA + S-adenosyl-L-methionine = N(4)-methylcytidine(1402) in 16S rRNA + S-adenosyl-L-homocysteine + H(+). Specifically methylates the N4 position of cytidine in position 1402 (C1402) of 16S rRNA. This chain is Ribosomal RNA small subunit methyltransferase H, found in Fervidobacterium nodosum (strain ATCC 35602 / DSM 5306 / Rt17-B1).